Reading from the N-terminus, the 403-residue chain is Na(+)/H(+) antiporter NhaH (403 aa).

12 helical membrane-spanning segments follow: residues 7-27, 34-54, 99-119, 125-145, 168-188, 196-216, 228-245, 250-272, 282-302, 311-331, 345-365, and 373-393; these read VFIQ…IAKL, VALV…IEEA, LAFL…YFLL, VAFT…LSIF, IAVV…EMGW, FMFL…GYVF, LEVA…FIAE, SGVI…IGMS, FWDS…GLEI, WGYI…AVYI, ILIN…LSLP, and QVLL…GLTL.

This sequence belongs to the monovalent cation:proton antiporter 1 (CPA1) transporter (TC 2.A.36) family.

It localises to the cell membrane. In terms of biological role, na(+)/H(+) antiporter that extrudes sodium in exchange for external protons. Can also transport lithium. This chain is Na(+)/H(+) antiporter NhaH (nhaH), found in Halobacillus aidingensis.